Here is a 227-residue protein sequence, read N- to C-terminus: A-type potassium channel modulatory protein KCNIP1 (227 aa).

The EF-hand 1; degenerate domain maps to 38–94; the sequence is LEMTMVCHRPEGLEQLEAQTNFTKRELQVLYRGFKNECPSGVVNEETFKQIYAQFFP. EF-hand domains are found at residues 97-132, 133-168, and 181-216; these read DAST…LLRG, TVHE…IYDM, and TPRQ…DDNI. The Ca(2+) site is built by Asp-146, Asn-148, Asp-150, Tyr-152, Glu-157, Asp-194, Asn-196, Asp-198, and Glu-205. An interaction with KCND2 region spans residues 214 to 227; it reads DNIMRSLQLFQNVM.

This sequence belongs to the recoverin family. Component of heteromultimeric potassium channels. Identified in potassium channel complexes containing KCND1, KCND2, KCND3, KCNIP1, KCNIP2, KCNIP3, KCNIP4, DPP6 and DPP10. Part of a heterooctamer composed of the tetrameric channel and four KCNIP1 chains. Probably part of a complex consisting of KCNIP1, KCNIP2 isoform 3 and KCND2. Self-associates to form homodimers and homotetramers. Interacts with KCNIP2 isoform 3 in a calcium-dependent manner. Interacts with KCND2; this interaction mediates the capture of both the N- and C-terminus of KCND2, thus preventing KCND2 N-type inactivation and modulates the channel gating kinetics. Interacts with KCND3; each KCNIP1 monomer interacts with two adjacent KCND3 subunits, through both the N-terminal inactivation ball of a KCND3 subunit and a C-terminal helix from the adjacent KCND3 subunit, clamping them together; this interaction stabilizes the tetrameric form and modulates the channel gating kinetics namely channel activation and inactivation kinetics and rate of recovery from inactivation. As to expression, expressed in brain. Found in a subpopulation of neurons widely distributed and enriched in Purkinje cells of the cerebellum and in the reticular thalamic and medial habenular nuclei.

It localises to the cell membrane. Its subcellular location is the cytoplasm. The protein resides in the cell projection. The protein localises to the dendrite. Functionally, regulatory subunit of Kv4/D (Shal)-type voltage-gated rapidly inactivating A-type potassium channels. Regulates channel density, inactivation kinetics and rate of recovery from inactivation in a calcium-dependent and isoform-specific manner. Modulates KCND2/Kv4.2 currents. In vitro, modulates KCND1/Kv4.1 currents. Increases the presence of KCND2 at the cell surface. This Mus musculus (Mouse) protein is A-type potassium channel modulatory protein KCNIP1.